The primary structure comprises 788 residues: DNA ligase (788 aa).

NAD(+)-binding positions include 35 to 39, 84 to 85, and Glu124; these read DAEYD and SL. The active-site N6-AMP-lysine intermediate is the Lys126. Residues Arg147, Glu184, Lys300, and Lys324 each contribute to the NAD(+) site. Cys418, Cys421, Cys448, and Cys454 together coordinate Zn(2+). Positions 707–788 constitute a BRCT domain; that stretch reads AEGLPLAGQT…FIERLAQLGS (82 aa).

It belongs to the NAD-dependent DNA ligase family. LigA subfamily. Mg(2+) serves as cofactor. The cofactor is Mn(2+).

It catalyses the reaction NAD(+) + (deoxyribonucleotide)n-3'-hydroxyl + 5'-phospho-(deoxyribonucleotide)m = (deoxyribonucleotide)n+m + AMP + beta-nicotinamide D-nucleotide.. Functionally, DNA ligase that catalyzes the formation of phosphodiester linkages between 5'-phosphoryl and 3'-hydroxyl groups in double-stranded DNA using NAD as a coenzyme and as the energy source for the reaction. It is essential for DNA replication and repair of damaged DNA. The protein is DNA ligase of Stutzerimonas stutzeri (strain A1501) (Pseudomonas stutzeri).